Here is a 490-residue protein sequence, read N- to C-terminus: MDIRATEQTILNWTGETLALGIFEGATELTEELGELNERLGGTLQELITEEEFEAKTGTSAVTRLGKDSPIRKLILVGLGKPEDFKLHSLRNAAANIARSAKKLKIKTLGISLPVFNNAPTLTTGAIVEGVLLALHTDLRFKSEPEDKGAKLETVDLLGLAGQETAINQAQIICDGVILARELVNGPANSVTPITMAQTAETLASDYGLTLTILEQEDCEKLGMGAYLGVAKASDLPPKFIHLTYKPEGTPKRKLAIVGKSLTFDSGGLNIKVSGSGIETMKMDMGGGAATLGAAKAIAQLKPDVEVHFICAATENMISGKAMHPGDILTASNGKTIEVNNTDAEGRLTLADALVFAEQLEVDAIVDLATLTGACIIALGDDISGLWSPNEELATQLKTAAELAGEKFWQMPLEEKYFEGMKSPIADMKNTGPRAGGSITAALFLKQFIKETPWAHLDIAGPVWTDKEGGINNTGATGFPVRTLVNWVLS.

The Mn(2+) site is built by lysine 260 and aspartate 265. Residue lysine 272 is part of the active site. Mn(2+) is bound by residues aspartate 284, aspartate 343, and glutamate 345. The active site involves arginine 347.

The protein belongs to the peptidase M17 family. The cofactor is Mn(2+).

It is found in the cytoplasm. It carries out the reaction Release of an N-terminal amino acid, Xaa-|-Yaa-, in which Xaa is preferably Leu, but may be other amino acids including Pro although not Arg or Lys, and Yaa may be Pro. Amino acid amides and methyl esters are also readily hydrolyzed, but rates on arylamides are exceedingly low.. The catalysed reaction is Release of an N-terminal amino acid, preferentially leucine, but not glutamic or aspartic acids.. Presumably involved in the processing and regular turnover of intracellular proteins. Catalyzes the removal of unsubstituted N-terminal amino acids from various peptides. The polypeptide is Probable cytosol aminopeptidase (Gloeothece citriformis (strain PCC 7424) (Cyanothece sp. (strain PCC 7424))).